Consider the following 276-residue polypeptide: Diaminopimelate epimerase (276 aa).

Substrate-binding residues include asparagine 13, glutamine 46, and asparagine 66. Residue cysteine 75 is the Proton donor of the active site. Residues 76–77 (GN), asparagine 159, asparagine 192, and 210–211 (ER) each bind substrate. The active-site Proton acceptor is cysteine 219. Substrate is bound at residue 220-221 (GS).

This sequence belongs to the diaminopimelate epimerase family. In terms of assembly, homodimer.

The protein resides in the cytoplasm. It catalyses the reaction (2S,6S)-2,6-diaminopimelate = meso-2,6-diaminopimelate. It participates in amino-acid biosynthesis; L-lysine biosynthesis via DAP pathway; DL-2,6-diaminopimelate from LL-2,6-diaminopimelate: step 1/1. In terms of biological role, catalyzes the stereoinversion of LL-2,6-diaminopimelate (L,L-DAP) to meso-diaminopimelate (meso-DAP), a precursor of L-lysine and an essential component of the bacterial peptidoglycan. The chain is Diaminopimelate epimerase from Aliivibrio fischeri (strain ATCC 700601 / ES114) (Vibrio fischeri).